The following is a 1478-amino-acid chain: ATP-binding cassette transporter abc2 (1478 aa).

Residues 1-25 (MVLEQDLDPFVGGNWMNSAYKGFTF) lie on the Vacuolar side of the membrane. A helical transmembrane segment spans residues 26-46 (LSATWLAPNIYLLISGCLQYF). Over 47–65 (YEVRKRSHYFHFRRFWTIW) the chain is Cytoplasmic. The helical transmembrane segment at 66–85 (LKSLVIMVLLFTHIYDCYKT) threads the bilayer. Asn86 carries an N-linked (GlcNAc...) asparagine glycan. Residues 86–90 (NESVW) lie on the Vacuolar side of the membrane. Residues 91 to 104 (NVLSIITYFLALFL) form a helical membrane-spanning segment. Residues 105–116 (HVVEQPTLRIPM) are Cytoplasmic-facing. Residues 117–137 (ASLLMFWLFKFLASALVLLLR) form a helical membrane-spanning segment. Over 138–154 (PNYTMFPMLNVVPSITF) the chain is Vacuolar. Asn139 is a glycosylation site (N-linked (GlcNAc...) asparagine). Residues 155–175 (FCSLVCLLAEIYVPPANRVWY) traverse the membrane as a helical segment. Residues 176 to 259 (PDDAAELEET…KKSSLYMWGV (84 aa)) lie on the Cytoplasmic side of the membrane. Residues 260 to 280 (LFLNHWKLTVVIIVLKLVQDV) traverse the membrane as a helical segment. In terms of domain architecture, ABC transmembrane type-1 1 spans 268-557 (TVVIIVLKLV…LPIVVSSVLE (290 aa)). Residues 281–310 (VAFIQPNLIRKIVIFVSSYSSEHPQPPQVG) lie on the Vacuolar side of the membrane. The chain crosses the membrane as a helical span at residues 311–331 (FSLAIAMFLTNVVQTALLQQY). Over 332 to 387 (FQLGMVLGMRWRSELITAIYRKSLRLSSAARQSRSVGDIVNYMSVDTQKVCDLTMF) the chain is Cytoplasmic. A helical membrane pass occupies residues 388-408 (LFVIVSGPFQIVLALTNLYHL). The Vacuolar portion of the chain corresponds to 409-411 (VGY). Residues 412-432 (GALSGAFVTFLLFPCNVVIAS) form a helical membrane-spanning segment. The Cytoplasmic portion of the chain corresponds to 433 to 495 (IFKRFQNRQM…MLKKIGIVNT (63 aa)). Residues 496–516 (IGNFTWLFAPILVSAATFGTF) traverse the membrane as a helical segment. The Vacuolar segment spans residues 517–539 (IVLYGKTRVLSVDIVFACLSLFN). Residues 540-560 (LLQFPLTMLPIVVSSVLEASV) traverse the membrane as a helical segment. The Cytoplasmic portion of the chain corresponds to 561–910 (AISRIYGFLT…VKWKVYWTYF (350 aa)). The ABC transporter 1 domain maps to 593 to 821 (LEIKKGTFSW…PDSQLFQLLS (229 aa)). 631–638 (GKVGMGKS) contributes to the ATP binding site. A disordered region spans residues 828–867 (TASSTGADTPLSRSQSVITSSTDVTSSASRSSDTVSNYPK). Over residues 829–840 (ASSTGADTPLSR) the composition is skewed to polar residues. 3 positions are modified to phosphoserine: Ser839, Ser843, and Ser863. Low complexity predominate over residues 841-863 (SQSVITSSTDVTSSASRSSDTVS). Residues 911 to 931 (KACSLFLIFLYFLFIIGGIGM) traverse the membrane as a helical segment. An ABC transmembrane type-1 2 domain is found at 918–1202 (IFLYFLFIIG…VVRQSVDVET (285 aa)). Over 932 to 968 (NVGTNVWLKHWSEVNTQLGYNPKPYFYLGIYTLFGLL) the chain is Vacuolar. The chain crosses the membrane as a helical span at residues 969-990 (SCALISLSSLTITVFCAIKSCR). Topologically, residues 991 to 1033 (YLHDSMVKAVLRAPMSFFETTPTGRILNRFSSDVYRVDEVISR) are cytoplasmic. The chain crosses the membrane as a helical span at residues 1034–1054 (VFMFFFRNLFQIVFVLAVICY). Residue Ser1055 is a topological domain, vacuolar. A helical transmembrane segment spans residues 1056 to 1076 (SPMFMILIVPLFFLYRYNQVY). The Cytoplasmic portion of the chain corresponds to 1077–1147 (YTQTSRELKR…SSNRWQAIRV (71 aa)). Residues 1148–1168 (EAIGALVVFSSAFFGVLSAVR) form a helical membrane-spanning segment. Residues 1169–1172 (GNPN) lie on the Vacuolar side of the membrane. The chain crosses the membrane as a helical span at residues 1173 to 1193 (SGLVGLSLSYAVQITQSLTFV). Over 1194 to 1478 (VRQSVDVETN…YSLAKESGLI (285 aa)) the chain is Cytoplasmic. Positions 1239–1473 (IKFDHYSVRY…KASLFYSLAK (235 aa)) constitute an ABC transporter 2 domain. 1273–1280 (GRTGAGKS) serves as a coordination point for ATP.

It belongs to the ABC transporter superfamily. ABCC family. Conjugate transporter (TC 3.A.1.208) subfamily.

Its subcellular location is the vacuole membrane. Its function is as follows. Involved in vacuolar sequestration of glutathione S-conjugates. Together with abc4, required for accumulation of a red pigment (ade pigment) in the vacuole of a mutant affected in the adenine biosynthetic pathway. The sequence is that of ATP-binding cassette transporter abc2 (abc2) from Schizosaccharomyces pombe (strain 972 / ATCC 24843) (Fission yeast).